The sequence spans 667 residues: Serine/threonine-protein kinase BUR1 (667 aa).

In terms of domain architecture, Protein kinase spans 60-378; sequence YKEEEKLGQG…AMSAMKHPFF (319 aa). ATP contacts are provided by residues 66 to 74 and K89; that span reads LGQGTFGEV. D207 serves as the catalytic Proton acceptor. Residues 408 to 667 are disordered; the sequence is HEAMSQKGPS…SEQKDIADLY (260 aa). Positions 432–443 are enriched in basic and acidic residues; the sequence is KFEKKSGIKREQ. Polar residues predominate over residues 494 to 516; that stretch reads NNHSGSLRNRITPSNMGTHSNPR. Residues 541 to 556 show a composition bias toward low complexity; the sequence is YNRGYSSSVNSRYNNR. Polar residues-rich tracts occupy residues 582–594, 602–611, and 622–632; these read DNNQSQTRLQGHS, SKYNSTQTNI, and NEYNASKLGSQ. Basic and acidic residues predominate over residues 633-667; it reads DTKKNDYPKHSETQKQQNNEEKKIHSEQKDIADLY.

This sequence belongs to the protein kinase superfamily. CMGC Ser/Thr protein kinase family. CDC2/CDKX subfamily.

The protein resides in the nucleus. It carries out the reaction L-seryl-[protein] + ATP = O-phospho-L-seryl-[protein] + ADP + H(+). The enzyme catalyses L-threonyl-[protein] + ATP = O-phospho-L-threonyl-[protein] + ADP + H(+). The catalysed reaction is [DNA-directed RNA polymerase] + ATP = phospho-[DNA-directed RNA polymerase] + ADP + H(+). Functionally, serine/threonine-protein kinase involved in transcription regulation. Phosphorylates the UBC2/RAD6 ubiquitin-conjugating enzyme (E2), leading to monoubiquitination of histone H2B and the silencing of telomeric-associated genes. Also required for histone H3 methylation. Necessary for the recovery from pheromone-induced growth arrest in the cell cycle G1 phase. The sequence is that of Serine/threonine-protein kinase BUR1 (BUR1) from Candida glabrata (strain ATCC 2001 / BCRC 20586 / JCM 3761 / NBRC 0622 / NRRL Y-65 / CBS 138) (Yeast).